A 1802-amino-acid polypeptide reads, in one-letter code: Transposon Ty4-H Gag-Pol polyprotein (1802 aa).

The stretch at 39-115 (RKVSIKDEQV…IQLLETNENN (77 aa)) forms a coiled coil. A ty4 protease region spans residues 381-501 (NNNLSPVQNE…KTKMVLSRKY (121 aa)). Residue Asp414 is the For protease activity; shared with dimeric partner of the active site. The interval 539–599 (AIKPTSSPGF…EPNEFWCQTC (61 aa)) is integrase-type zinc finger-like. In terms of domain architecture, Integrase catalytic spans 619–786 (TDHEPGSSWC…LPLKAISRQP (168 aa)). Residues Asp630 and Asp695 each contribute to the Mg(2+) site. Residues 1223-1248 (KRKRKRHDKNNSLTSYELERDKKRSK) are disordered. Residues 1375–1510 (RNMFMKTLDI…DILGMDLVYN (136 aa)) enclose the Reverse transcriptase Ty1/copia-type domain. Residues Asp1383, Asp1462, Asp1463, Asp1644, Glu1686, and Asp1720 each coordinate Mg(2+). Residues 1644–1790 (DASVGSEYDA…KRFIQVLKNK (147 aa)) form the RNase H Ty1/copia-type domain.

In terms of assembly, the protease is a homodimer, whose active site consists of two apposed aspartic acid residues. Post-translationally, proteolytically processed into capsid protein (CA), Ty4 protease (PR), integrase (IN) and reverse transcriptase/ribonuclease H (RT) proteins. Initially, virus-like particles (VLPs) are composed of the structural unprocessed proteins Gag and Gag-Pol, and also contain the host initiator methionine tRNA (tRNA(i)-Met) which serves as a primer for minus-strand DNA synthesis, and a dimer of genomic Ty RNA. Processing of the polyproteins occurs within the particle and proceeds by an ordered pathway, called maturation. First, the protease (PR) is released by autocatalytic cleavage of the Gag-Pol polyprotein, and this cleavage is a prerequisite for subsequent processing at the remaining sites to release the mature structural and catalytic proteins. Maturation takes place prior to the RT reaction and is required to produce transposition-competent VLPs.

The protein resides in the cytoplasm. Its subcellular location is the nucleus. The catalysed reaction is DNA(n) + a 2'-deoxyribonucleoside 5'-triphosphate = DNA(n+1) + diphosphate. The enzyme catalyses Endonucleolytic cleavage to 5'-phosphomonoester.. Its function is as follows. Capsid protein (CA) is the structural component of the virus-like particle (VLP), forming the shell that encapsulates the retrotransposons dimeric RNA genome. Functionally, the aspartyl protease (PR) mediates the proteolytic cleavages of the Gag and Gag-Pol polyproteins after assembly of the VLP. Reverse transcriptase/ribonuclease H (RT) is a multifunctional enzyme that catalyzes the conversion of the retro-elements RNA genome into dsDNA within the VLP. The enzyme displays a DNA polymerase activity that can copy either DNA or RNA templates, and a ribonuclease H (RNase H) activity that cleaves the RNA strand of RNA-DNA heteroduplexes during plus-strand synthesis and hydrolyzes RNA primers. The conversion leads to a linear dsDNA copy of the retrotransposon that includes long terminal repeats (LTRs) at both ends. In terms of biological role, integrase (IN) targets the VLP to the nucleus, where a subparticle preintegration complex (PIC) containing at least integrase and the newly synthesized dsDNA copy of the retrotransposon must transit the nuclear membrane. Once in the nucleus, integrase performs the integration of the dsDNA into the host genome. The protein is Transposon Ty4-H Gag-Pol polyprotein (TY4B-H) of Saccharomyces cerevisiae (strain ATCC 204508 / S288c) (Baker's yeast).